The chain runs to 318 residues: GTP cyclohydrolase MptA (318 aa).

The protein belongs to the GTP cyclohydrolase IV family. In terms of assembly, homodimer. The cofactor is Fe(2+).

It carries out the reaction GTP + H2O = 7,8-dihydroneopterin 2',3'-cyclic phosphate + formate + diphosphate + H(+). It participates in cofactor biosynthesis; 5,6,7,8-tetrahydromethanopterin biosynthesis. Its function is as follows. Converts GTP to 7,8-dihydro-D-neopterin 2',3'-cyclic phosphate, the first intermediate in the biosynthesis of coenzyme methanopterin. The protein is GTP cyclohydrolase MptA of Methanosarcina mazei (strain ATCC BAA-159 / DSM 3647 / Goe1 / Go1 / JCM 11833 / OCM 88) (Methanosarcina frisia).